A 233-amino-acid polypeptide reads, in one-letter code: Antilisterial bacteriocin subtilosin biosynthesis protein AlbG (233 aa).

5 helical membrane passes run 4-24 (STVF…FGWV), 46-66 (GLLA…LHYV), 116-136 (TYVM…FEIV), 145-165 (TPPI…LFYM), and 192-212 (IGWM…LAAI).

Its subcellular location is the cell membrane. Functionally, involved in the production of the bacteriocin subtilosin. The polypeptide is Antilisterial bacteriocin subtilosin biosynthesis protein AlbG (albG) (Bacillus subtilis).